The sequence spans 129 residues: Small ribosomal subunit protein uS11 (129 aa).

This sequence belongs to the universal ribosomal protein uS11 family. In terms of assembly, part of the 30S ribosomal subunit. Interacts with proteins S7 and S18. Binds to IF-3.

Located on the platform of the 30S subunit, it bridges several disparate RNA helices of the 16S rRNA. Forms part of the Shine-Dalgarno cleft in the 70S ribosome. The polypeptide is Small ribosomal subunit protein uS11 (Symbiobacterium thermophilum (strain DSM 24528 / JCM 14929 / IAM 14863 / T)).